The sequence spans 64 residues: MAKYLYLDQDECMACESCVELCPEAFRMSSAGEYAEVIDPNTTAECVEDAISTCPVECIEWREE.

4Fe-4S ferredoxin-type domains lie at 3-31 (KYLYLDQDECMACESCVELCPEAFRMSSA) and 34-64 (YAEVIDPNTTAECVEDAISTCPVECIEWREE). Residues Cys-12, Cys-15, Cys-18, and Cys-54 each coordinate [4Fe-4S] cluster.

Homodimer. [4Fe-4S] cluster is required as a cofactor.

In terms of biological role, ferredoxins are iron-sulfur proteins that transfer electrons in a wide variety of metabolic reactions. The sequence is that of Ferredoxin-2 from Nitratidesulfovibrio vulgaris (strain DSM 19637 / Miyazaki F) (Desulfovibrio vulgaris).